The sequence spans 133 residues: Small ribosomal subunit protein uS8 (133 aa).

This sequence belongs to the universal ribosomal protein uS8 family. As to quaternary structure, part of the 30S ribosomal subunit. Contacts proteins S5 and S12.

In terms of biological role, one of the primary rRNA binding proteins, it binds directly to 16S rRNA central domain where it helps coordinate assembly of the platform of the 30S subunit. This chain is Small ribosomal subunit protein uS8, found in Trichormus variabilis (strain ATCC 29413 / PCC 7937) (Anabaena variabilis).